The sequence spans 103 residues: UPF0235 protein Dole_0289 (103 aa).

It belongs to the UPF0235 family.

This chain is UPF0235 protein Dole_0289, found in Desulfosudis oleivorans (strain DSM 6200 / JCM 39069 / Hxd3) (Desulfococcus oleovorans).